We begin with the raw amino-acid sequence, 487 residues long: Cysteine--tRNA ligase (487 aa).

Cysteine 27 is a binding site for Zn(2+). The short motif at 29–39 is the 'HIGH' region element; the sequence is ATVQGLPHVGH. Residues 174–194 are disordered; it reads IDDMQGAPDADPRGKKDPRDF. The span at 183 to 194 shows a compositional bias: basic and acidic residues; sequence ADPRGKKDPRDF. Cysteine 225, histidine 250, and glutamate 254 together coordinate Zn(2+). Positions 281-285 match the 'KMSKS' region motif; sequence KMSKS. Lysine 284 lines the ATP pocket.

This sequence belongs to the class-I aminoacyl-tRNA synthetase family. Monomer. Zn(2+) is required as a cofactor.

It localises to the cytoplasm. It carries out the reaction tRNA(Cys) + L-cysteine + ATP = L-cysteinyl-tRNA(Cys) + AMP + diphosphate. This is Cysteine--tRNA ligase from Arthrobacter sp. (strain FB24).